A 96-amino-acid polypeptide reads, in one-letter code: Small ribosomal subunit protein bS16 (96 aa).

The protein belongs to the bacterial ribosomal protein bS16 family.

The chain is Small ribosomal subunit protein bS16 from Anaplasma phagocytophilum (strain HZ).